The sequence spans 293 residues: Aspartate carbamoyltransferase catalytic subunit (293 aa).

2 residues coordinate carbamoyl phosphate: Arg50 and Thr51. Residue Lys78 participates in L-aspartate binding. Residues Arg100, His127, and Gln130 each coordinate carbamoyl phosphate. L-aspartate is bound by residues Arg160 and Arg210. Carbamoyl phosphate is bound by residues Ala253 and Pro254.

The protein belongs to the aspartate/ornithine carbamoyltransferase superfamily. ATCase family. Heterododecamer (2C3:3R2) of six catalytic PyrB chains organized as two trimers (C3), and six regulatory PyrI chains organized as three dimers (R2).

The enzyme catalyses carbamoyl phosphate + L-aspartate = N-carbamoyl-L-aspartate + phosphate + H(+). The protein operates within pyrimidine metabolism; UMP biosynthesis via de novo pathway; (S)-dihydroorotate from bicarbonate: step 2/3. Its function is as follows. Catalyzes the condensation of carbamoyl phosphate and aspartate to form carbamoyl aspartate and inorganic phosphate, the committed step in the de novo pyrimidine nucleotide biosynthesis pathway. This chain is Aspartate carbamoyltransferase catalytic subunit, found in Staphylococcus aureus (strain USA300).